Here is a 75-residue protein sequence, read N- to C-terminus: DNA-directed RNA polymerase subunit omega (75 aa).

It belongs to the RNA polymerase subunit omega family. In terms of assembly, in cyanobacteria the RNAP catalytic core is composed of 2 alpha, 1 beta, 1 beta', 1 gamma and 1 omega subunit. When a sigma factor is associated with the core the holoenzyme is formed, which can initiate transcription.

It carries out the reaction RNA(n) + a ribonucleoside 5'-triphosphate = RNA(n+1) + diphosphate. In terms of biological role, promotes RNA polymerase assembly. Latches the N- and C-terminal regions of the beta' subunit thereby facilitating its interaction with the beta and alpha subunits. The protein is DNA-directed RNA polymerase subunit omega of Microcystis aeruginosa (strain NIES-843 / IAM M-2473).